The primary structure comprises 337 residues: MKFVDSASIFVHAGDGGKGCVSFRREKFVPKGGPDGGDGGRGGHVWLRTNRQLTTLLDFKYKKKYIAVRGVHGQGARKTGRDGADVVIDVPCGTIVRNGETNEIIADLTGEDQEILIARGGKGGRGNQHFATPTRQAPRYAEPGQKGELLMLNMELKLMADVGLVGFPNAGKSTLISVISAAKPKIADYPFTTLVPNLGIVRYEEYKSFVMADIPGIIEGAAEGKGLGLQFLRHIERTKILAILIAADSPDIADEYHTLLGELEKFEKELLDKPRLVVVTKMDIAAEDLEIPTLEEGVRVLSISAVSGQGLKELKDELWREVSGRIRAAEPLDESLG.

Residues 1–159 form the Obg domain; sequence MKFVDSASIF…LMLNMELKLM (159 aa). Residues 160 to 323 form the OBG-type G domain; sequence ADVGLVGFPN…LKDELWREVS (164 aa). GTP-binding positions include 166-173, 191-195, 213-216, 280-283, and 304-306; these read GFPNAGKS, FTTLV, DIPG, TKMD, and SAV. Serine 173 and threonine 193 together coordinate Mg(2+).

Belongs to the TRAFAC class OBG-HflX-like GTPase superfamily. OBG GTPase family. As to quaternary structure, monomer. Requires Mg(2+) as cofactor.

The protein resides in the cytoplasm. In terms of biological role, an essential GTPase which binds GTP, GDP and possibly (p)ppGpp with moderate affinity, with high nucleotide exchange rates and a fairly low GTP hydrolysis rate. Plays a role in control of the cell cycle, stress response, ribosome biogenesis and in those bacteria that undergo differentiation, in morphogenesis control. The sequence is that of GTPase Obg from Pelodictyon phaeoclathratiforme (strain DSM 5477 / BU-1).